Here is a 128-residue protein sequence, read N- to C-terminus: Keratin-associated protein 21-1 (128 aa).

The interval 11–117 is 51 X 2 AA repeats of G-[YCGS]; the sequence is GGCGYGSRYG…RYGCGYGSGC (107 aa).

This sequence belongs to the KRTAP type 21 family. As to quaternary structure, interacts with hair keratins. Strong expression in narrowly defined pattern restricted to the lower and middle cortical regions of the hair shaft in both developing and cycling hair. During hair follicle regression (catagen), expression levels decrease until expression is no longer detectable in follicles at resting stage (telogen).

In terms of biological role, in the hair cortex, hair keratin intermediate filaments are embedded in an interfilamentous matrix, consisting of hair keratin-associated proteins (KRTAP), which are essential for the formation of a rigid and resistant hair shaft through their extensive disulfide bond cross-linking with abundant cysteine residues of hair keratins. The matrix proteins include the high-sulfur and high-glycine-tyrosine keratins. The polypeptide is Keratin-associated protein 21-1 (Krtap21-1) (Mus musculus (Mouse)).